Here is a 283-residue protein sequence, read N- to C-terminus: Bifunctional protein FolD (283 aa).

Residues 164-166 and Ser189 contribute to the NADP(+) site; that span reads GRS.

The protein belongs to the tetrahydrofolate dehydrogenase/cyclohydrolase family. Homodimer.

The catalysed reaction is (6R)-5,10-methylene-5,6,7,8-tetrahydrofolate + NADP(+) = (6R)-5,10-methenyltetrahydrofolate + NADPH. It catalyses the reaction (6R)-5,10-methenyltetrahydrofolate + H2O = (6R)-10-formyltetrahydrofolate + H(+). Its pathway is one-carbon metabolism; tetrahydrofolate interconversion. In terms of biological role, catalyzes the oxidation of 5,10-methylenetetrahydrofolate to 5,10-methenyltetrahydrofolate and then the hydrolysis of 5,10-methenyltetrahydrofolate to 10-formyltetrahydrofolate. This chain is Bifunctional protein FolD, found in Lactobacillus acidophilus (strain ATCC 700396 / NCK56 / N2 / NCFM).